The sequence spans 423 residues: ATP-citrate synthase alpha chain protein 2 (423 aa).

3 residues coordinate citrate: Asn-343, Thr-345, and Arg-376.

This sequence belongs to the succinate/malate CoA ligase beta subunit family. In terms of assembly, heterooctamer of 4 alpha and 4 beta chains.

Its subcellular location is the cytoplasm. It is found in the cytosol. The catalysed reaction is oxaloacetate + acetyl-CoA + ADP + phosphate = citrate + ATP + CoA. In terms of biological role, ATP citrate-lyase is the primary enzyme responsible for the synthesis of cytosolic acetyl-CoA, used for the elongation of fatty acids and biosynthesis of isoprenoids, flavonoids and malonated derivatives. May supply substrate to the cytosolic acetyl-CoA carboxylase, which generates the malonyl-CoA used for the synthesis of a multitude of compounds, including very long chain fatty acids and flavonoids. Required for normal growth and development and elongation of C18 fatty acids to C20 to C24 fatty acids in seeds. In contrast to all known animal ACL enzymes having a homomeric structure, plant ACLs are composed of alpha and beta chains. This is ATP-citrate synthase alpha chain protein 2 (ACLA-2) from Arabidopsis thaliana (Mouse-ear cress).